We begin with the raw amino-acid sequence, 91 residues long: Probable insulin-like peptide gamma-type 1 (91 aa).

The signal sequence occupies residues 1 to 26 (MSSYRQTLFILIILIVIILFVNEGQG). 3 disulfide bridges follow: C37-C66, C49-C79, and C65-C70.

This sequence belongs to the insulin family.

It is found in the secreted. In Caenorhabditis elegans, this protein is Probable insulin-like peptide gamma-type 1 (ins-11).